The following is a 457-amino-acid chain: MTTDEGAKNSRGNPAATVAEQGEDVTSKKDRGVLKIVKRVGHGEETPMIGDRVYVHYNGKLANGKKFDSSHDRNEPFVFSIGKGQVIKAWDIGVATMKKGEICHLLCKPEYAYGATGSLPKIPSNATLFFEVELLDFKGEDLLEDGGIIRRTKRRGEGYSNPNEGARVQIHLEGRCGGRVFDCRDVAFTVGEGEDHDIPIGIDKALEKMQREEQCILHLGPRYGFGEAGKPKFGIEPNAELIYEVTLKSFEKAKESWEMDTKEKLEQAAIVKEKGTVYFKGGKYVQAVIQYGKIVSWLEMEYGLSEKESKASESFLLAAFLNLAMCYLKLREYTKAVECCDKALGLDSANEKGLYRRGEAQLLMNEFESAKGDFEKVLEVNPQNKAARLQIFMCQKKAKEHNERDRRTYANMFKKFAEQDAKEEANKAMSKKTSEGVTNEKLTASHAVEEEKPEGHV.

Position 1 is an N-acetylmethionine (M1). Positions 1-26 (MTTDEGAKNSRGNPAATVAEQGEDVT) are disordered. N6-acetyllysine is present on K28. PPIase FKBP-type domains are found at residues 50 to 138 (GDRV…LDFK) and 165 to 251 (GARV…KSFE). TPR repeat units lie at residues 268–301 (AAIV…LEME), 317–350 (LAAF…DSAN), and 351–384 (EKGL…NPQN). The tract at residues 421-457 (AKEEANKAMSKKTSEGVTNEKLTASHAVEEEKPEGHV) is disordered. At S445 the chain carries Phosphoserine. The span at 447 to 457 (AVEEEKPEGHV) shows a compositional bias: basic and acidic residues.

In terms of assembly, part of a heteromultimeric cytoplasmic complex with HSP90AA1, HSPA1A/HSPA1B and steroid receptors. Upon ligand binding dissociates from the complex and FKBP4 takes its place. Interacts with functionally mature heterooligomeric progesterone receptor complexes along with HSP90 and TEBP. Interacts with NR3C1. Interacts with Akt/AKT1 and PHLPP1; enhancing dephosphorylation and subsequent activation of Akt/AKT1. Interacts with IFI44L; this interaction modulates the kinase activity of IKBKB and IKBKE. Interacts with IKBKB and IKBKE. Post-translationally, acetylation impairs ability to promote interaction between Akt/AKT1 and PHLPP1. Deacetylation by SIRT7 promotes interaction between Akt/AKT1 and PHLPP1, leading to suppress Akt/AKT1 activation. In terms of processing, ubiquitinated, leading to degradation in a proteasome-dependent manner. Deubiquitinated by USP49, leading to stabilization.

It localises to the cytoplasm. The protein resides in the nucleus. The enzyme catalyses [protein]-peptidylproline (omega=180) = [protein]-peptidylproline (omega=0). Inhibited by both FK506 and rapamycin. In terms of biological role, immunophilin protein with PPIase and co-chaperone activities. Component of unligated steroid receptors heterocomplexes through interaction with heat-shock protein 90 (HSP90). Plays a role in the intracellular trafficking of heterooligomeric forms of steroid hormone receptors maintaining the complex into the cytoplasm when unliganded. Acts as a regulator of Akt/AKT1 activity by promoting the interaction between Akt/AKT1 and PHLPP1, thereby enhancing dephosphorylation and subsequent activation of Akt/AKT1. Interacts with IKBKE and IKBKB which facilitates IKK complex assembly leading to increased IKBKE and IKBKB kinase activity, NF-kappaB activation, and IFN production. The protein is Peptidyl-prolyl cis-trans isomerase FKBP5 (FKBP5) of Saimiri boliviensis boliviensis (Bolivian squirrel monkey).